A 506-amino-acid polypeptide reads, in one-letter code: ATP synthase subunit alpha, chloroplastic (506 aa).

170-177 is a binding site for ATP; that stretch reads GDRQTGKT.

It belongs to the ATPase alpha/beta chains family. F-type ATPases have 2 components, CF(1) - the catalytic core - and CF(0) - the membrane proton channel. CF(1) has five subunits: alpha(3), beta(3), gamma(1), delta(1), epsilon(1). CF(0) has four main subunits: a, b, b' and c.

It localises to the plastid. It is found in the chloroplast thylakoid membrane. It catalyses the reaction ATP + H2O + 4 H(+)(in) = ADP + phosphate + 5 H(+)(out). Its function is as follows. Produces ATP from ADP in the presence of a proton gradient across the membrane. The alpha chain is a regulatory subunit. The chain is ATP synthase subunit alpha, chloroplastic from Chlorokybus atmophyticus (Soil alga).